We begin with the raw amino-acid sequence, 218 residues long: Small ribosomal subunit protein uS5 (218 aa).

The S5 DRBM domain occupies 66-129 (LKQELLNVNL…REAKLNLVPV (64 aa)).

It belongs to the universal ribosomal protein uS5 family. Part of the 30S ribosomal subunit. Contacts protein S4.

With S4 and S12 plays an important role in translational accuracy. The chain is Small ribosomal subunit protein uS5 from Pyrobaculum aerophilum (strain ATCC 51768 / DSM 7523 / JCM 9630 / CIP 104966 / NBRC 100827 / IM2).